Reading from the N-terminus, the 122-residue chain is Large ribosomal subunit protein bL17 (122 aa).

It belongs to the bacterial ribosomal protein bL17 family. In terms of assembly, part of the 50S ribosomal subunit. Contacts protein L32.

This chain is Large ribosomal subunit protein bL17, found in Wigglesworthia glossinidia brevipalpis.